The chain runs to 1097 residues: Protein STICHEL-like 3 (1097 aa).

Disordered regions lie at residues 1 to 22 (MTTT…NNRI), 74 to 168 (SLRD…YRIG), 220 to 293 (NVRP…GFGE), 321 to 358 (GRSL…DSSS), and 400 to 436 (DSDL…LTEK). The span at 10-20 (RVASSSSTRNN) shows a compositional bias: polar residues. Over residues 95–113 (LPKKGDLVEGGRRSVDLKK) the composition is skewed to basic and acidic residues. Over residues 126–136 (PVVNFGTSKVT) the composition is skewed to polar residues. A compositionally biased stretch (basic and acidic residues) spans 137-168 (PSDERSGPVSGERDSGRRVKREESSRKSYRIG). Positions 227–241 (YGGGGGGGNTRGCAG) are enriched in gly residues. Residues 245–259 (RPKRRKFRGTRRVRG) are compositionally biased toward basic residues. 2 stretches are compositionally biased toward basic and acidic residues: residues 281-291 (VEKHDGEKEGF) and 332-345 (KGGR…RNGS). Residues 346-358 (DKMMIQSDDDSSS) show a composition bias toward low complexity. Residues 411-429 (EKKHKKKSHVNARHRHRQQ) show a composition bias toward basic residues. 472-479 (GPNGTGKT) lines the ATP pocket. Cys-491, Cys-500, Cys-503, and Cys-506 together coordinate Zn(2+). Positions 742-770 (KEDMEKLRQALKTLSEAEKQLRVSNDKLT) form a coiled coil. 3 disordered regions span residues 790-828 (SSTA…DSRK), 913-932 (DPRN…DKSL), and 956-1003 (VTES…SQSI). Basic and acidic residues-rich tracts occupy residues 796–807 (GGRESSDHHLDP) and 818–828 (GLDRRRGDSRK). Positions 993–1003 (ASQSQNQSQSI) are enriched in polar residues.

It belongs to the DnaX/STICHEL family.

In Arabidopsis thaliana (Mouse-ear cress), this protein is Protein STICHEL-like 3.